The sequence spans 51 residues: Large ribosomal subunit protein eL39 (51 aa).

It belongs to the eukaryotic ribosomal protein eL39 family.

The sequence is that of Large ribosomal subunit protein eL39 (RpL39) from Plutella xylostella (Diamondback moth).